A 209-amino-acid chain; its full sequence is Ribosomal RNA large subunit methyltransferase E (209 aa).

Residues Gly-63, Trp-65, Asp-83, Asp-99, and Asp-124 each contribute to the S-adenosyl-L-methionine site. Lys-164 functions as the Proton acceptor in the catalytic mechanism.

The protein belongs to the class I-like SAM-binding methyltransferase superfamily. RNA methyltransferase RlmE family.

It localises to the cytoplasm. The catalysed reaction is uridine(2552) in 23S rRNA + S-adenosyl-L-methionine = 2'-O-methyluridine(2552) in 23S rRNA + S-adenosyl-L-homocysteine + H(+). Its function is as follows. Specifically methylates the uridine in position 2552 of 23S rRNA at the 2'-O position of the ribose in the fully assembled 50S ribosomal subunit. The polypeptide is Ribosomal RNA large subunit methyltransferase E (Shigella dysenteriae serotype 1 (strain Sd197)).